The sequence spans 238 residues: MDKVAAVVAAAGRGSRMGTETRKQYLSLAGLPVVGHVLRAMEASSAVKSVVTVVAPGEENYFRLTVVERLGIRKVAAIVPGGEERQDSVYNGLLALAPDTGIVVVHDGARPLLSPGDINAVVQAAAAYGAATLAVPVKDTVKMAGRDGFVLRTLSREHLWLVQTPQAFRYDIIMNAHRQARQKKYAATDDAGLVELLGRPVKIVAGSYENIKITTPEDLTVAEAVIKARQGRLAEAGG.

Belongs to the IspD/TarI cytidylyltransferase family. IspD subfamily.

The enzyme catalyses 2-C-methyl-D-erythritol 4-phosphate + CTP + H(+) = 4-CDP-2-C-methyl-D-erythritol + diphosphate. It functions in the pathway isoprenoid biosynthesis; isopentenyl diphosphate biosynthesis via DXP pathway; isopentenyl diphosphate from 1-deoxy-D-xylulose 5-phosphate: step 2/6. Its function is as follows. Catalyzes the formation of 4-diphosphocytidyl-2-C-methyl-D-erythritol from CTP and 2-C-methyl-D-erythritol 4-phosphate (MEP). This is 2-C-methyl-D-erythritol 4-phosphate cytidylyltransferase from Pelotomaculum thermopropionicum (strain DSM 13744 / JCM 10971 / SI).